Here is a 1166-residue protein sequence, read N- to C-terminus: Peroxisomal ATPase PEX6 (1166 aa).

The protein belongs to the AAA ATPase family. In terms of assembly, interacts with PEX1; forming the PEX1-PEX6 AAA ATPase complex, which is composed of a heterohexamer formed by a trimer of PEX1-PEX6 dimers.

It is found in the membrane. It catalyses the reaction ATP + H2O = ADP + phosphate + H(+). Its function is as follows. Component of the PEX1-PEX6 AAA ATPase complex involved in peroxisome biosynthesis. The complex acts as a protein dislocase complex that mediates the ATP-dependent extraction of the PEX5 receptor from peroxisomal membranes, an essential step for PEX5 recycling. Specifically recognizes PEX5 monoubiquitinated at 'Cys-6', and pulls it out of the peroxisome lumen through the PEX2-PEX10-PEX12 retrotranslocation channel. Extraction by the PEX1-PEX6 AAA ATPase complex is accompanied by unfolding of the TPR repeats and release of bound cargo from PEX5. This is Peroxisomal ATPase PEX6 from Komagataella phaffii (strain GS115 / ATCC 20864) (Yeast).